Here is a 105-residue protein sequence, read N- to C-terminus: UPF0145 protein lpp0255 (105 aa).

Belongs to the UPF0145 family.

This is UPF0145 protein lpp0255 from Legionella pneumophila (strain Paris).